A 722-amino-acid chain; its full sequence is BTB/POZ domain-containing protein 9 (722 aa).

Residues 46-112 (ADVEFIVEEE…IYSGTLLLST (67 aa)) form the BTB domain. The BACK domain maps to 151–247 (CMILDAARLY…MNLEHLLQVV (97 aa)). Residues 565–593 (QDKNYLKKIADMEKEREKREKEKKTAKTD) adopt a coiled-coil conformation. Positions 577–594 (EKEREKREKEKKTAKTDD) are enriched in basic and acidic residues. 2 disordered regions span residues 577–626 (EKER…VLRS) and 640–722 (PLTP…RETL). Residues 597 to 606 (IASTSGSSLA) show a composition bias toward polar residues. The segment covering 607 to 626 (SGHAESPSTSSSSSQSVLRS) has biased composition (low complexity). A compositionally biased stretch (pro residues) spans 641 to 658 (LTPPALSPPGTPALPAPL). The segment covering 670–679 (EQNQPSNISA) has biased composition (polar residues). Over residues 686-704 (SPSSRSNPSPSLSRSRSQS) the composition is skewed to low complexity.

Detected in the brain (at protein level).

The protein resides in the cytoplasm. Functionally, essential for the homeostatic regulation of sleep and motor activity, by depressing hyperactivity and wakefulness. May function, at least in part, by ensuring dopamine biosynthesis. The sequence is that of BTB/POZ domain-containing protein 9 from Drosophila melanogaster (Fruit fly).